Here is a 418-residue protein sequence, read N- to C-terminus: F-box protein At5g03970 (418 aa).

In terms of domain architecture, F-box spans Ser18–Ala66.

The sequence is that of F-box protein At5g03970 from Arabidopsis thaliana (Mouse-ear cress).